Reading from the N-terminus, the 394-residue chain is Choline/ethanolamine kinase (394 aa).

The tract at residues 1 to 42 (MAADGTGVVGGGAVGGGLPKDGLQDAKCPEPIPNRRRASSLS) is disordered. Alanine 2 carries the post-translational modification N-acetylalanine. Gly residues predominate over residues 7-19 (GVVGGGAVGGGLP). Residues 75 to 81 (SGGLSNL), arginine 104, 146 to 152 (QYLPSRP), glutamine 244, and aspartate 264 each bind ATP. 77–79 (GLS) serves as a coordination point for substrate.

This sequence belongs to the choline/ethanolamine kinase family. In terms of assembly, homodimer, and heterodimer with CHKA. Expressed ubiquitously with the highest level in testis.

It carries out the reaction choline + ATP = phosphocholine + ADP + H(+). The enzyme catalyses ethanolamine + ATP = phosphoethanolamine + ADP + H(+). Its pathway is phospholipid metabolism; phosphatidylethanolamine biosynthesis; phosphatidylethanolamine from ethanolamine: step 1/3. Functionally, has a key role in phospholipid metabolism, and catalyzes the first step of phosphatidylethanolamine and phosphatidylcholine biosynthesis. This Mus musculus (Mouse) protein is Choline/ethanolamine kinase (Chkb).